The primary structure comprises 35 residues: Alpha-amanitin proprotein (35 aa).

Positions 1 to 10 (MSDINATRLP) are excised as a propeptide. (3R,4R)-4,5-dihydroxyisoleucine; in form alpha-amanitin is present on isoleucine 11. Isoleucine 11 carries the (3R,4S)-4-hydroxyisoleucine; in form gamma-amanitin modification. A cross-link (cyclopeptide (Ile-Pro)) is located at residues 11-18 (IWGIGCNP). Residues 12–16 (WGIGC) constitute a cross-link (2'-cysteinyl-6'-hydroxytryptophan sulfoxide (Trp-Cys)). Proline 18 is subject to 4-hydroxyproline. The propeptide occupies 19-35 (CVGDDVTTLLTRGEALC).

The protein belongs to the MSDIN fungal toxin family. Post-translationally, processed by the macrocyclase-peptidase enzyme POPB to yield a toxic cyclic decapeptide. POPB first removes 10 residues from the N-terminus. Conformational trapping of the remaining peptide forces the enzyme to release this intermediate rather than proceed to macrocyclization. The enzyme rebinds the remaining peptide in a different conformation and catalyzes macrocyclization of the N-terminal 8 residues.

Major toxin belonging to the bicyclic octapeptides amatoxins that acts by binding non-competitively to RNA polymerase II and greatly slowing the elongation of transcripts from target promoters. This is Alpha-amanitin proprotein from Amanita bisporigera (Destroying angel).